The sequence spans 158 residues: Small ribosomal subunit protein uS13 (158 aa).

The protein belongs to the universal ribosomal protein uS13 family. As to quaternary structure, part of the 30S ribosomal subunit. Forms a loose heterodimer with protein S19. Forms two bridges to the 50S subunit in the 70S ribosome.

Located at the top of the head of the 30S subunit, it contacts several helices of the 16S rRNA. In the 70S ribosome it contacts the 23S rRNA (bridge B1a) and protein L5 of the 50S subunit (bridge B1b), connecting the 2 subunits; these bridges are implicated in subunit movement. The chain is Small ribosomal subunit protein uS13 from Picrophilus torridus (strain ATCC 700027 / DSM 9790 / JCM 10055 / NBRC 100828 / KAW 2/3).